The primary structure comprises 342 residues: ERGWFDILDDWLKRDRFVFVGWSGILLFPCAYLALGGWLTGTTFVTSWYTHGLASSYLEGCNFLTVAVSTPANSMGHSLLLLWGPEAQGDFTRWCQLGGLWTFIALHGAFGLIGFMLRQFEIARLVGVRPYNAIAFSAPIAVFVSVFLIYPLGQSSWFFAPSFGVAAIFRFLLFFQGFHNWTLNPFHMMGVAGVLGGALLCAIHGATVENTLFQDGEGASTFRAFNPTQAEETYSMVTANRFWSQIFGIAFSNKRWLHFFMLFVPVTGLWMSAIGVVGLALNLRSYDFISQEIRAAEDPEFETFYTKNLLLNEGIRAWMAPQDQPHENFVFPEEVLPRGNAL.

At 1-29 (ERGWFDILDDWLKRDRFVFVGWSGILLFP) the chain is on the cytoplasmic side. A helical transmembrane segment spans residues 30–50 (CAYLALGGWLTGTTFVTSWYT). The Lumenal segment spans residues 51 to 113 (HGLASSYLEG…IALHGAFGLI (63 aa)). H107 contacts chlorophyll a. The chain crosses the membrane as a helical span at residues 114 to 130 (GFMLRQFEIARLVGVRP). The pheophytin a site is built by Q119 and N132. The Cytoplasmic segment spans residues 131 to 141 (YNAIAFSAPIA). A helical membrane pass occupies residues 142–155 (VFVSVFLIYPLGQS). Over 156–196 (SWFFAPSFGVAAIFRFLLFFQGFHNWTLNPFHMMGVAGVLG) the chain is Lumenal. H187 contacts chlorophyll a. The helical transmembrane segment at 197–217 (GALLCAIHGATVENTLFQDGE) threads the bilayer. Positions 204 and 251 each coordinate a plastoquinone. H204 is a Fe cation binding site. The Cytoplasmic segment spans residues 218–267 (GASTFRAFNPTQAEETYSMVTANRFWSQIFGIAFSNKRWLHFFMLFVPVT). A Fe cation-binding site is contributed by H258. Residues 268–284 (GLWMSAIGVVGLALNLR) form a helical membrane-spanning segment. Residues 285–342 (SYDFISQEIRAAEDPEFETFYTKNLLLNEGIRAWMAPQDQPHENFVFPEEVLPRGNAL) are Lumenal-facing.

This sequence belongs to the reaction center PufL/M/PsbA/D family. In terms of assembly, PSII is composed of 1 copy each of membrane proteins PsbA, PsbB, PsbC, PsbD, PsbE, PsbF, PsbH, PsbI, PsbJ, PsbK, PsbL, PsbM, PsbT, PsbX, PsbY, PsbZ, Psb30/Ycf12, peripheral proteins PsbO, CyanoQ (PsbQ), PsbU, PsbV and a large number of cofactors. It forms dimeric complexes. It depends on The D1/D2 heterodimer binds P680, chlorophylls that are the primary electron donor of PSII, and subsequent electron acceptors. It shares a non-heme iron and each subunit binds pheophytin, quinone, additional chlorophylls, carotenoids and lipids. There is also a Cl(-1) ion associated with D1 and D2, which is required for oxygen evolution. The PSII complex binds additional chlorophylls, carotenoids and specific lipids. as a cofactor.

It localises to the cellular thylakoid membrane. It carries out the reaction 2 a plastoquinone + 4 hnu + 2 H2O = 2 a plastoquinol + O2. In terms of biological role, photosystem II (PSII) is a light-driven water:plastoquinone oxidoreductase that uses light energy to abstract electrons from H(2)O, generating O(2) and a proton gradient subsequently used for ATP formation. It consists of a core antenna complex that captures photons, and an electron transfer chain that converts photonic excitation into a charge separation. The D1/D2 (PsbA/PsbD) reaction center heterodimer binds P680, the primary electron donor of PSII as well as several subsequent electron acceptors. D2 is needed for assembly of a stable PSII complex. This is Photosystem II D2 protein from Thermostichus vulcanus (Synechococcus vulcanus).